The primary structure comprises 355 residues: Protein RecA (355 aa).

72–79 (GPESSGKT) contributes to the ATP binding site.

This sequence belongs to the RecA family.

It localises to the cytoplasm. Functionally, can catalyze the hydrolysis of ATP in the presence of single-stranded DNA, the ATP-dependent uptake of single-stranded DNA by duplex DNA, and the ATP-dependent hybridization of homologous single-stranded DNAs. It interacts with LexA causing its activation and leading to its autocatalytic cleavage. This chain is Protein RecA, found in Wolbachia pipientis subsp. Culex pipiens (strain wPip).